The chain runs to 228 residues: Lipoprotein-releasing system ATP-binding protein LolD (228 aa).

The ABC transporter domain maps to 7 to 228 (LNCQNLTKDY…MQDGVLRPEM (222 aa)). 43-50 (GSSGSGKS) is an ATP binding site.

This sequence belongs to the ABC transporter superfamily. Lipoprotein translocase (TC 3.A.1.125) family. As to quaternary structure, the complex is composed of two ATP-binding proteins (LolD) and two transmembrane proteins (LolC and LolE).

It is found in the cell inner membrane. Its function is as follows. Part of the ABC transporter complex LolCDE involved in the translocation of mature outer membrane-directed lipoproteins, from the inner membrane to the periplasmic chaperone, LolA. Responsible for the formation of the LolA-lipoprotein complex in an ATP-dependent manner. The polypeptide is Lipoprotein-releasing system ATP-binding protein LolD (Mannheimia succiniciproducens (strain KCTC 0769BP / MBEL55E)).